Consider the following 215-residue polypeptide: Cytochrome c biogenesis ATP-binding export protein CcmA (215 aa).

Positions 12–215 constitute an ABC transporter domain; the sequence is LAAHALTYSR…TRLLHLQKAP (204 aa). 44-51 provides a ligand contact to ATP; sequence GPNGIGKT.

The protein belongs to the ABC transporter superfamily. CcmA exporter (TC 3.A.1.107) family. As to quaternary structure, the complex is composed of two ATP-binding proteins (CcmA) and two transmembrane proteins (CcmB).

The protein localises to the cell inner membrane. It carries out the reaction heme b(in) + ATP + H2O = heme b(out) + ADP + phosphate + H(+). Part of the ABC transporter complex CcmAB involved in the biogenesis of c-type cytochromes; once thought to export heme, this seems not to be the case, but its exact role is uncertain. Responsible for energy coupling to the transport system. The protein is Cytochrome c biogenesis ATP-binding export protein CcmA of Xylella fastidiosa (strain Temecula1 / ATCC 700964).